Reading from the N-terminus, the 216-residue chain is 3,4-dihydroxy-2-butanone 4-phosphate synthase (216 aa).

Residues 33 to 34, Asp38, 146 to 150, and Glu170 contribute to the D-ribulose 5-phosphate site; these read RE and RRGHT. Glu34 serves as a coordination point for Mg(2+). His149 is a binding site for Mg(2+).

Belongs to the DHBP synthase family. In terms of assembly, homodimer. The cofactor is Mg(2+). Mn(2+) serves as cofactor.

It catalyses the reaction D-ribulose 5-phosphate = (2S)-2-hydroxy-3-oxobutyl phosphate + formate + H(+). The protein operates within cofactor biosynthesis; riboflavin biosynthesis; 2-hydroxy-3-oxobutyl phosphate from D-ribulose 5-phosphate: step 1/1. Its function is as follows. Catalyzes the conversion of D-ribulose 5-phosphate to formate and 3,4-dihydroxy-2-butanone 4-phosphate. The polypeptide is 3,4-dihydroxy-2-butanone 4-phosphate synthase (Pseudomonas putida (strain ATCC 47054 / DSM 6125 / CFBP 8728 / NCIMB 11950 / KT2440)).